The following is a 155-amino-acid chain: Small ribosomal subunit protein uS7 (155 aa).

This sequence belongs to the universal ribosomal protein uS7 family. In terms of assembly, part of the 30S ribosomal subunit. Contacts proteins S9 and S11.

In terms of biological role, one of the primary rRNA binding proteins, it binds directly to 16S rRNA where it nucleates assembly of the head domain of the 30S subunit. Is located at the subunit interface close to the decoding center, probably blocks exit of the E-site tRNA. This is Small ribosomal subunit protein uS7 from Corynebacterium aurimucosum (strain ATCC 700975 / DSM 44827 / CIP 107346 / CN-1) (Corynebacterium nigricans).